Reading from the N-terminus, the 3371-residue chain is Protocadherin-23 (3371 aa).

Positions 1 to 40 (MSPCGRKMGEGRQQRRAPVGKLLLLPGRRDTPHGRSGSSG) are disordered. Topologically, residues 1 to 46 (MSPCGRKMGEGRQQRRAPVGKLLLLPGRRDTPHGRSGSSGARTQRS) are cytoplasmic. Residues 47-67 (LLWLLVHVWLWAASGSSAQLF) traverse the membrane as a helical segment. Cadherin domains are found at residues 65-167 (QLFN…SPRF), 168-296 (PLDS…PPVF), 297-413 (EQDE…RPAI), 424-539 (ARVS…PPLF), 540-663 (SQQH…EPIF), 664-771 (WRQV…HPVF), 772-881 (NPST…RPKY), 877-979 (ERPK…HPAF), 980-1082 (LRTS…SPSW), 1085-1191 (EHLV…SPTF), 1192-1294 (LHDV…RPFF), 1299-1415 (PGKE…IPEN), 1404-1510 (SQNI…SPSF), 1511-1620 (QDEL…NPTF), 1620-1724 (FISF…APVF), 1725-1829 (KQHL…APEF), 1830-1933 (IVSS…SPSF), 1934-2038 (PTLY…DPVL), 2039-2130 (EQNP…VIHM), 2140-2242 (SHHL…SPCF), 2243-2347 (EQSI…APAF), 2347-2447 (FLPS…PPVF), 2448-2549 (SQDF…APEF), 2550-2665 (TVKS…PPNF), 2666-2769 (SSLS…APQF), 2770-2880 (MFSS…EPIF), and 2881-2988 (TQDQ…TPLA). At 68 to 2986 (NLTLSVDEGL…NVSFSSEGTP (2919 aa)) the chain is on the extracellular side. N-linked (GlcNAc...) asparagine glycosylation is found at Asn-669, Asn-772, Asn-814, Asn-905, Asn-966, Asn-1038, Asn-1172, and Asn-1275. Residues Asn-1487, Asn-1595, Asn-1617, and Asn-1664 are each glycosylated (N-linked (GlcNAc...) asparagine). Residue Asn-1898 is glycosylated (N-linked (GlcNAc...) asparagine). Residues Asn-2054, Asn-2070, and Asn-2098 are each glycosylated (N-linked (GlcNAc...) asparagine). Asn-2329 carries an N-linked (GlcNAc...) asparagine glycan. Residues Asn-2479, Asn-2497, Asn-2555, and Asn-2664 are each glycosylated (N-linked (GlcNAc...) asparagine). Residues Asn-2929 and Asn-2977 are each glycosylated (N-linked (GlcNAc...) asparagine). The helical transmembrane segment at 2987–3017 (LAVFASSFSISLVVSFLVFLILICILIVMIL) threads the bilayer. Over 3018–3371 (RHKQKDTINN…ELKAEDEVQI (354 aa)) the chain is Cytoplasmic. A compositionally biased stretch (basic and acidic residues) spans 3117 to 3140 (KCSDSALSDHESRVPDSGIPRDSD). Positions 3117-3141 (KCSDSALSDHESRVPDSGIPRDSDQ) are disordered.

Cerebral cortex and testis.

Its subcellular location is the membrane. In terms of biological role, calcium-dependent cell-adhesion protein. The polypeptide is Protocadherin-23 (DCHS2) (Homo sapiens (Human)).